Here is a 438-residue protein sequence, read N- to C-terminus: Glycerol-3-phosphate acyltransferase 3 (438 aa).

The helical transmembrane segment at 14–34 (WLTLVGGLILLPSAFGLSLGI) threads the bilayer. Phosphoserine occurs at positions 68 and 77. Transmembrane regions (helical) follow at residues 137-157 (ISPR…CFLL) and 161-181 (VTLA…VGQL). The HXXXXD motif motif lies at 229 to 234 (HTSPID).

This sequence belongs to the 1-acyl-sn-glycerol-3-phosphate acyltransferase family. Most abundant in epididymal fat, followed by small intestine, brown adipose tissue, kidney, heart and colon.

It is found in the endoplasmic reticulum membrane. It carries out the reaction sn-glycerol 3-phosphate + an acyl-CoA = a 1-acyl-sn-glycero-3-phosphate + CoA. The catalysed reaction is a 1-acyl-sn-glycero-3-phosphate + an acyl-CoA = a 1,2-diacyl-sn-glycero-3-phosphate + CoA. It catalyses the reaction dodecanoyl-CoA + sn-glycerol 3-phosphate = 1-dodecanoyl-sn-glycerol 3-phosphate + CoA. The enzyme catalyses sn-glycerol 3-phosphate + hexadecanoyl-CoA = 1-hexadecanoyl-sn-glycero-3-phosphate + CoA. It carries out the reaction sn-glycerol 3-phosphate + (9Z)-octadecenoyl-CoA = 1-(9Z-octadecenoyl)-sn-glycero-3-phosphate + CoA. The catalysed reaction is (9Z,12Z)-octadecadienoyl-CoA + sn-glycerol 3-phosphate = 1-(9Z,12Z)-octadecadienoyl-sn-glycero-3-phosphate + CoA. It catalyses the reaction 1-tetradecanoyl-sn-glycerol 3-phosphate + (9Z)-octadecenoyl-CoA = 1-tetradecanoyl-2-(9Z)-octadecenoyl-sn-glycero-3-phosphate + CoA. The enzyme catalyses 1-hexadecanoyl-sn-glycero-3-phosphate + (9Z)-octadecenoyl-CoA = 1-hexadecanoyl-2-(9Z-octadecenoyl)-sn-glycero-3-phosphate + CoA. It carries out the reaction 1-(9Z-octadecenoyl)-sn-glycero-3-phosphate + (9Z)-octadecenoyl-CoA = 1,2-di-(9Z-octadecenoyl)-sn-glycero-3-phosphate + CoA. The catalysed reaction is 1-(6Z,9Z,12Z-octadecatrienoyl)-sn-glycero-3-phosphate + (9Z)-octadecenoyl-CoA = (6Z,9Z,12Z)-octadecatrienoyl-2-(9Z)-octadecenoyl-sn-glycero-3-phosphate + CoA. It catalyses the reaction 1-(9Z,12Z,15Z)-octadecatrienoyl-sn-glycero-3-phosphate + (9Z)-octadecenoyl-CoA = 1-(9Z,12Z,15Z)-octadecatrienoyl-2-(9Z)-octadecenoyl-sn-glycero-3-phosphate + CoA. The enzyme catalyses 1-(9Z-octadecenoyl)-sn-glycero-3-phosphate + tetradecanoyl-CoA = 1-(9Z)-octadecenoyl-2-tetradecanoyl-sn-glycero-3-phosphate + CoA. It carries out the reaction 1-(9Z-octadecenoyl)-sn-glycero-3-phosphate + hexadecanoyl-CoA = 1-(9Z)-octadecenoyl-2-hexadecanoyl-sn-glycero-3-phosphate + CoA. The catalysed reaction is 1-(9Z-octadecenoyl)-sn-glycero-3-phosphate + octadecanoyl-CoA = 1-(9Z-octadecenoyl)-2-octadecanoyl-sn-glycero-3-phosphate + CoA. It catalyses the reaction 1-(9Z-octadecenoyl)-sn-glycero-3-phosphate + (9Z,12Z)-octadecadienoyl-CoA = 1-(9Z)-octadecenoyl-2-(9Z,12Z)-octadecadienoyl-sn-glycero-3-phosphate + CoA. The enzyme catalyses 1-(5Z,8Z,11Z,14Z-eicosatetraenoyl)-sn-glycero-3-phosphate + (9Z)-octadecenoyl-CoA = 1-(5Z,8Z,11Z,14Z)-eicosatetraenoyl-2-(9Z)-octadecenoyl-sn-glycero-3-phosphate + CoA. It participates in glycerolipid metabolism; triacylglycerol biosynthesis. Its pathway is phospholipid metabolism; CDP-diacylglycerol biosynthesis; CDP-diacylglycerol from sn-glycerol 3-phosphate: step 1/3. In terms of biological role, converts glycerol-3-phosphate to 1-acyl-sn-glycerol-3-phosphate (lysophosphatidic acid or LPA) by incorporating an acyl moiety at the sn-1 position of the glycerol backbone. Also converts LPA into 1,2-diacyl-sn-glycerol-3-phosphate (phosphatidic acid or PA) by incorporating an acyl moiety at the sn-2 position of the glycerol backbone. Protects cells against lipotoxicity. The polypeptide is Glycerol-3-phosphate acyltransferase 3 (Mus musculus (Mouse)).